The sequence spans 254 residues: NADPH-dependent ferric-chelate reductase (254 aa).

Residues 15–136 enclose the FAD-binding FR-type domain; the sequence is LRFRELTVLR…AGPRGSLVVP (122 aa).

The protein belongs to the SIP oxidoreductase family.

The protein resides in the cytoplasm. It carries out the reaction 2 a Fe(II)-siderophore + NADP(+) + H(+) = 2 a Fe(III)-siderophore + NADPH. Functionally, plays a role in iron homeostasis under excess nickel conditions. The sequence is that of NADPH-dependent ferric-chelate reductase (yqjH) from Escherichia coli (strain K12).